Here is a 308-residue protein sequence, read N- to C-terminus: Ribosomal RNA large subunit methyltransferase F (308 aa).

Belongs to the methyltransferase superfamily. METTL16/RlmF family.

Its subcellular location is the cytoplasm. The enzyme catalyses adenosine(1618) in 23S rRNA + S-adenosyl-L-methionine = N(6)-methyladenosine(1618) in 23S rRNA + S-adenosyl-L-homocysteine + H(+). In terms of biological role, specifically methylates the adenine in position 1618 of 23S rRNA. The sequence is that of Ribosomal RNA large subunit methyltransferase F from Salmonella dublin (strain CT_02021853).